We begin with the raw amino-acid sequence, 402 residues long: Putative PDZ domain-containing protein PDZK1P1 (402 aa).

PDZ domains are found at residues 12 to 93 (RLCY…VDKE) and 121 to 206 (IVEM…VDKE). The disordered stretch occupies residues 230 to 258 (GSVKEAPAPTPTSLEVSSPPDTTEEEDHK). Positions 240-250 (PTSLEVSSPPD) are enriched in polar residues. Residues 261–341 (LCRLAKGENG…NVTLLVCGKK (81 aa)) form the PDZ 3 domain. A disordered region spans residues 362-402 (DTPPDSKEGIVVESKHDSHMAKERAHSTASHSSSNSEDTEM). The span at 365–387 (PDSKEGIVVESKHDSHMAKERAH) shows a compositional bias: basic and acidic residues. The span at 388 to 402 (STASHSSSNSEDTEM) shows a compositional bias: low complexity.

This sequence belongs to the NHER family.

The protein is Putative PDZ domain-containing protein PDZK1P1 of Homo sapiens (Human).